The chain runs to 624 residues: Low affinity potassium transport system protein Kup (624 aa).

Helical transmembrane passes span 9 to 29 (LPAI…TSPL), 49 to 69 (VFGF…IKYL), 103 to 123 (VIMG…TPAI), 137 to 157 (PQLD…LFMI), 165 to 185 (VGKL…GLGL), 213 to 233 (VSFI…ALYA), 247 to 267 (WFTV…ALLL), 276 to 296 (PFFL…AALA), 337 to 357 (IYIP…IVIV), 365 to 385 (LAAA…ILST), 398 to 418 (FVAL…TANL), and 421 to 441 (LLSG…VMTT).

The protein belongs to the HAK/KUP transporter (TC 2.A.72) family.

Its subcellular location is the cell inner membrane. The catalysed reaction is K(+)(in) + H(+)(in) = K(+)(out) + H(+)(out). Its function is as follows. Responsible for the low-affinity transport of potassium into the cell. Likely operates as a K(+):H(+) symporter. The chain is Low affinity potassium transport system protein Kup from Shigella dysenteriae serotype 1 (strain Sd197).